The primary structure comprises 61 residues: Photosystem II reaction center protein K (61 aa).

Residues 1 to 24 (MLNIFSLIWICLNSALYSSGFFFG) constitute a propeptide that is removed on maturation. Residues 36-56 (IIDFMPVIPVFFFLLAFVWQA) traverse the membrane as a helical segment.

It belongs to the PsbK family. In terms of assembly, PSII is composed of 1 copy each of membrane proteins PsbA, PsbB, PsbC, PsbD, PsbE, PsbF, PsbH, PsbI, PsbJ, PsbK, PsbL, PsbM, PsbT, PsbX, PsbY, PsbZ, Psb30/Ycf12, at least 3 peripheral proteins of the oxygen-evolving complex and a large number of cofactors. It forms dimeric complexes.

It is found in the plastid. The protein resides in the chloroplast thylakoid membrane. In terms of biological role, one of the components of the core complex of photosystem II (PSII). PSII is a light-driven water:plastoquinone oxidoreductase that uses light energy to abstract electrons from H(2)O, generating O(2) and a proton gradient subsequently used for ATP formation. It consists of a core antenna complex that captures photons, and an electron transfer chain that converts photonic excitation into a charge separation. This chain is Photosystem II reaction center protein K, found in Coffea arabica (Arabian coffee).